The sequence spans 559 residues: DNA primase (559 aa).

The CHC2-type zinc-finger motif lies at 37–61; the sequence is CPFHEERSASFSVNQVKGFYYCFGC. The 82-residue stretch at 246–327 folds into the Toprim domain; sequence KQVIVTEGYL…KGGVILFENN (82 aa). The Mg(2+) site is built by E252, D296, and D298.

Belongs to the DnaG primase family. As to quaternary structure, monomer. Interacts with DnaB. Zn(2+) is required as a cofactor. It depends on Mg(2+) as a cofactor.

It catalyses the reaction ssDNA + n NTP = ssDNA/pppN(pN)n-1 hybrid + (n-1) diphosphate.. RNA polymerase that catalyzes the synthesis of short RNA molecules used as primers for DNA polymerase during DNA replication. The chain is DNA primase from Helicobacter pylori (strain J99 / ATCC 700824) (Campylobacter pylori J99).